Here is a 275-residue protein sequence, read N- to C-terminus: Mitochondrial outer membrane protein porin (275 aa).

At Met-1 the chain carries Blocked amino end (Met).

It belongs to the eukaryotic mitochondrial porin family. Highly divergent.

It localises to the mitochondrion outer membrane. Forms a channel of about 1,7 nM through the cell membrane that allows diffusion of small hydrophilic molecules. The channel adopts an open conformation at low or zero membrane potential and a closed conformation at potentials above 20 mv. The open state has a weak anion selectivity whereas the closed state is cation-selective. This is Mitochondrial outer membrane protein porin (porA) from Dictyostelium discoideum (Social amoeba).